We begin with the raw amino-acid sequence, 258 residues long: Aspartate/glutamate leucyltransferase (258 aa).

This sequence belongs to the R-transferase family. Bpt subfamily.

It localises to the cytoplasm. The catalysed reaction is N-terminal L-glutamyl-[protein] + L-leucyl-tRNA(Leu) = N-terminal L-leucyl-L-glutamyl-[protein] + tRNA(Leu) + H(+). It catalyses the reaction N-terminal L-aspartyl-[protein] + L-leucyl-tRNA(Leu) = N-terminal L-leucyl-L-aspartyl-[protein] + tRNA(Leu) + H(+). Its function is as follows. Functions in the N-end rule pathway of protein degradation where it conjugates Leu from its aminoacyl-tRNA to the N-termini of proteins containing an N-terminal aspartate or glutamate. The polypeptide is Aspartate/glutamate leucyltransferase (Rhizobium leguminosarum bv. trifolii (strain WSM2304)).